The chain runs to 132 residues: Small ribosomal subunit protein uS8c (132 aa).

Belongs to the universal ribosomal protein uS8 family. In terms of assembly, part of the 30S ribosomal subunit.

The protein localises to the plastid. It is found in the chloroplast. One of the primary rRNA binding proteins, it binds directly to 16S rRNA central domain where it helps coordinate assembly of the platform of the 30S subunit. The protein is Small ribosomal subunit protein uS8c (rps8) of Physcomitrium patens (Spreading-leaved earth moss).